A 303-amino-acid chain; its full sequence is ATP-dependent Clp protease ATP-binding subunit CLPT3, chloroplastic (303 aa).

The transit peptide at 1-37 directs the protein to the chloroplast; it reads MLLANAPHNGCSRLQQVTLLRASGAKLHRKRALTVVA. Disordered regions lie at residues 185 to 214 and 278 to 303; these read ASTE…RDSD and RDDN…DEYE.

The protein belongs to the ClpA/ClpB family.

The protein resides in the plastid. The protein localises to the chloroplast. In terms of biological role, accessory protein regulating the assembly of the plastid Clp protease system. In Chlamydomonas reinhardtii (Chlamydomonas smithii), this protein is ATP-dependent Clp protease ATP-binding subunit CLPT3, chloroplastic.